A 361-amino-acid chain; its full sequence is Probable cysteine protease RD19B (361 aa).

A signal peptide spans 1 to 24 (MDYHLRVLFSVSLIFVFVSVSVCG). The propeptide at 25–131 (DEDVLIRQVV…NQAPILPTQN (107 aa)) is activation peptide. 2 disulfide bridges follow: C153–C203 and C187–C237. C156 is an active-site residue. N250 is a glycosylation site (N-linked (GlcNAc...) asparagine). C293 and C347 are disulfide-bonded. Active-site residues include H299 and N326.

It belongs to the peptidase C1 family.

The protein resides in the lytic vacuole. Probable thiol protease. The sequence is that of Probable cysteine protease RD19B from Arabidopsis thaliana (Mouse-ear cress).